Here is a 100-residue protein sequence, read N- to C-terminus: Urease subunit gamma (100 aa).

This sequence belongs to the urease gamma subunit family. In terms of assembly, heterotrimer of UreA (gamma), UreB (beta) and UreC (alpha) subunits. Three heterotrimers associate to form the active enzyme.

Its subcellular location is the cytoplasm. The enzyme catalyses urea + 2 H2O + H(+) = hydrogencarbonate + 2 NH4(+). Its pathway is nitrogen metabolism; urea degradation; CO(2) and NH(3) from urea (urease route): step 1/1. The sequence is that of Urease subunit gamma from Actinobacillus pleuropneumoniae (Haemophilus pleuropneumoniae).